Consider the following 76-residue polypeptide: MGGISIWQLLIIALIVVLLFGTKKLRSLGGDLGGAVKGFKNAMSSEDEKKAIEDTSAEKTAQTEEKKTESKDKEQA.

Residues 1-21 (MGGISIWQLLIIALIVVLLFG) form a helical membrane-spanning segment. The tract at residues 43–76 (MSSEDEKKAIEDTSAEKTAQTEEKKTESKDKEQA) is disordered. Positions 46–76 (EDEKKAIEDTSAEKTAQTEEKKTESKDKEQA) are enriched in basic and acidic residues.

This sequence belongs to the TatA/E family. In terms of assembly, the Tat system comprises two distinct complexes: a TatABC complex, containing multiple copies of TatA, TatB and TatC subunits, and a separate TatA complex, containing only TatA subunits. Substrates initially bind to the TatABC complex, which probably triggers association of the separate TatA complex to form the active translocon.

Its subcellular location is the cell inner membrane. Part of the twin-arginine translocation (Tat) system that transports large folded proteins containing a characteristic twin-arginine motif in their signal peptide across membranes. TatA could form the protein-conducting channel of the Tat system. This Shewanella loihica (strain ATCC BAA-1088 / PV-4) protein is Sec-independent protein translocase protein TatA.